We begin with the raw amino-acid sequence, 54 residues long: Pars intercerebralis major peptide D1 (54 aa).

It belongs to the granulin family. Six disulfide bonds are present. As to expression, brain.

The protein localises to the secreted. This is Pars intercerebralis major peptide D1 from Locusta migratoria (Migratory locust).